Reading from the N-terminus, the 131-residue chain is NADPH-dependent 7-cyano-7-deazaguanine reductase (131 aa).

The Thioimide intermediate role is filled by Cys47. The active-site Proton donor is the Asp54. Substrate-binding positions include 69–71 (MEL) and 88–89 (HE).

The protein belongs to the GTP cyclohydrolase I family. QueF type 1 subfamily.

It is found in the cytoplasm. The catalysed reaction is 7-aminomethyl-7-carbaguanine + 2 NADP(+) = 7-cyano-7-deazaguanine + 2 NADPH + 3 H(+). The protein operates within tRNA modification; tRNA-queuosine biosynthesis. Catalyzes the NADPH-dependent reduction of 7-cyano-7-deazaguanine (preQ0) to 7-aminomethyl-7-deazaguanine (preQ1). This chain is NADPH-dependent 7-cyano-7-deazaguanine reductase, found in Microcystis aeruginosa (strain NIES-843 / IAM M-2473).